Consider the following 1243-residue polypeptide: Tau-tubulin kinase 2 (1243 aa).

In terms of domain architecture, Protein kinase spans 21 to 284 (WKVLRKIGGG…LLTSVFDNSI (264 aa)). Residues 27–35 (IGGGGFGEI) and K50 contribute to the ATP site. Catalysis depends on D141, which acts as the Proton acceptor. A Phosphoserine modification is found at S445. A compositionally biased stretch (polar residues) spans 674-683 (VASTQSTSGS). Disordered stretches follow at residues 674 to 695 (VAST…KKDL) and 737 to 761 (TGHD…DPPD). Position 786 is a phosphoserine (S786). Residues 1063 to 1086 (QINGSASPQFLPRPPPGKPPVRPG) are disordered. Residues 1073–1084 (LPRPPPGKPPVR) show a composition bias toward pro residues. S1102 is subject to Phosphoserine. Residues 1115 to 1129 (QNGSQKSRSTTQCKS) are compositionally biased toward polar residues. Residues 1115 to 1243 (QNGSQKSRST…KSKPASKLSR (129 aa)) are disordered. Composition is skewed to low complexity over residues 1144–1170 (VVPR…PSRA), 1187–1202 (SKSP…SRRS), and 1227–1243 (SSKT…KLSR).

The protein belongs to the protein kinase superfamily. CK1 Ser/Thr protein kinase family. In terms of assembly, interacts with CEP164. Interacts with MCRS1; the interaction is required for recruitment of TTBK2 to the mother centriole.

It is found in the cell projection. It localises to the cilium. The protein resides in the cytoplasm. The protein localises to the cytoskeleton. Its subcellular location is the cilium basal body. It is found in the microtubule organizing center. It localises to the centrosome. The protein resides in the centriole. The protein localises to the cytosol. Its subcellular location is the nucleus. The enzyme catalyses L-seryl-[protein] + ATP = O-phospho-L-seryl-[protein] + ADP + H(+). The catalysed reaction is L-threonyl-[protein] + ATP = O-phospho-L-threonyl-[protein] + ADP + H(+). In terms of biological role, serine/threonine kinase that acts as a key regulator of ciliogenesis: controls the initiation of ciliogenesis by binding to the distal end of the basal body and promoting the removal of CCP110, which caps the mother centriole, leading to the recruitment of IFT proteins, which build the ciliary axoneme. Has some substrate preference for proteins that are already phosphorylated on a Tyr residue at the +2 position relative to the phosphorylation site. Able to phosphorylate tau on serines in vitro. Phosphorylates MPHOSPH9 which promotes its ubiquitination and proteasomal degradation, loss of MPHOSPH9 facilitates the removal of the CP110-CEP97 complex (a negative regulator of ciliogenesis) from the mother centrioles, promoting the initiation of ciliogenesis. Required for recruitment of CPLANE2 and INTU to the mother centriole. The polypeptide is Tau-tubulin kinase 2 (Ttbk2) (Mus musculus (Mouse)).